A 1433-amino-acid polypeptide reads, in one-letter code: MAFRKENKIKNNFSKIRITLASPEEILENSFGEVLKPETINYRTYKPERDGLFCERIFGPVKDFECHCGKYKRIRYRGIVCDRCGVEVTEKKVRRERMGHIHLVVPVAHIWYFRSLPNKIGYLLGLPTKKLDAIIYYERYVVIQPGVAEGLSQLDLLSEEEYLDKLDEIERTHKGNQNLEDTNPDKFIAKIGAEAIYDLLCRVDLDSISYELRDRANTDGSQQRKTEALKRLQVVESFRASKGVNRPEWMVMKVIPVIPPDLRPLVPLDGGRFATSDLNDLYRRVIIRNNRLKRLIEIKAPEVILRNEKRMLQEAVDSLFDNSRKSSAVKSDNNRPLKSLSDSLKGKQGRFRQNLLGKRVDYSARSVIVVGPELKMHECGLPKDMAAELYKPFIIRKLIERGIVKTVKSAKKIVDRKEPVIWDILEYVMKGHPVLLNRAPTLHRLGIQAFQPKLIEGKAIQLHPLSCTAFNADFDGDQMAVHLPLSNEAILEAQLLMLASHNILNPANGAPITVPSQDMVLGLYYITKLRPNTKGHGLIFYGPEEATIAYNEGKVDIHAPIKVYVEDYENGELVRRMVETSVGRLMVNEYVPKKVGYVNEVLGKKALRDIIGSVIKICGVATTAKFLDDIKNLGYYMAFKGGLSFNLADVLIPDEKDQLIQEGYTAVEQIMQDYSMGFITFNERYNQIIDTWTHINGRLSNVLIKQLSSDNDGFNSVFMMMDSGARGSKEQIRQLSGMRGLMAKPQKSGAEGGQIIENPILSNFKEGLSVLEYFISTHGARKGLADTALKTADAGYLTRRLVDVSHDVIITEEDCGTLRGLLTTELKQNEDVVASLYERILGRVSVHDIIHPTTGDIIVRAGEEIREQAAQIIEDSPIEAVEIRSVLTCESKKGVCAKCYGRNLATNRMVQRGEVVGVIAAQSIGEPGTQLTLRTFHVGGIASNVATENSLLSKYDGILEFEELRAVDVTDESHQVVVSRMTELRIADPNTGIILANHNIPYGAKLFFRQGDAVKKGDKIIEWDPFNAVIVSEVAGTLSFEGVVENVTFKMESDETTGLKEKIIIESKDKTMAPYARIIDENGEMLKNYSLPMGAHVVKDDGDTVKVGEILVKIPRSVGKAGDITGGLPRVTELFEARNPSNPAIVSEIDGEIGFGKLKRGNREITVTSKLGEEKKYLIPLSKQLLVQENDFVRAGTPLSDGAITPADILAIKGPTAVQEYIVNEVQDVYRLQGVKINDKHFEVIVRQMMRKVEIVDPGDTLFLEQQVVDKFEVMEENDRIWGKKVVIDAGDSQVLKAGQIVTARKLRDENSMLKRKDLKIVKVRDAKSATASQILQGITRAALQTKSFMSAASFQETTKVLNEAAICGKTDYLEGLKENVICGHLIPAGTGLRDYEKLVVMHRDDYEKATAERKSFLSVPTAEPAMEEAPSE.

Residues cysteine 66, cysteine 68, cysteine 81, and cysteine 84 each coordinate Zn(2+). 3 residues coordinate Mg(2+): aspartate 473, aspartate 475, and aspartate 477. Positions 815, 889, 896, and 899 each coordinate Zn(2+).

The protein belongs to the RNA polymerase beta' chain family. In terms of assembly, the RNAP catalytic core consists of 2 alpha, 1 beta, 1 beta' and 1 omega subunit. When a sigma factor is associated with the core the holoenzyme is formed, which can initiate transcription. The cofactor is Mg(2+). Zn(2+) serves as cofactor.

It carries out the reaction RNA(n) + a ribonucleoside 5'-triphosphate = RNA(n+1) + diphosphate. Functionally, DNA-dependent RNA polymerase catalyzes the transcription of DNA into RNA using the four ribonucleoside triphosphates as substrates. The chain is DNA-directed RNA polymerase subunit beta' from Porphyromonas gingivalis (strain ATCC BAA-308 / W83).